Consider the following 115-residue polypeptide: Cycloviolacin-O13 (115 aa).

The signal sequence occupies residues 1-22 (MDAKKMFVALVLIATFALPSLA). The propeptide occupies 23-81 (TFEKDFITPETIQAILKKSAPLSNIMLEEDVINALLKSKTVISNPIIEEAFLKNSNGLN). The segment at residues 82–111 (GIPCGESCVWIPCISAAIGCSCKSKVCYRN) is a cross-link (cyclopeptide (Gly-Asn)). Disulfide bonds link C85–C101, C89–C103, and C94–C108. The propeptide occupies 112 to 115 (SLDN).

In terms of processing, cycloviolacin-O13 is a cyclic peptide. Expressed in leaves, petals, petioles, roots and runners (at protein level).

In terms of biological role, probably participates in a plant defense mechanism. Has hemolytic activity. The chain is Cycloviolacin-O13 from Viola odorata (Sweet violet).